The primary structure comprises 390 residues: L-serine phosphate decarboxylase Cj1436c (390 aa).

K243 is modified (N6-(pyridoxal phosphate)lysine).

It belongs to the class-I pyridoxal-phosphate-dependent aminotransferase family. The cofactor is pyridoxal 5'-phosphate.

The enzyme catalyses O-phospho-L-serine + H(+) = phosphoethanolamine + CO2. It functions in the pathway capsule biogenesis; capsule polysaccharide biosynthesis. Functionally, pyridoxal phosphate (PLP)-dependent decarboxylase involved in the biosynthesis of amidated D-glucuronic acid structures found on the capsular polysaccharide (CPS) of C.jejuni. Catalyzes the decarboxylation of L-serine phosphate to ethanolamine phosphate. Less active with L-threonine phosphate. No activity with L-serine, L-threonine, L-aspartate or L-glutamate. In Campylobacter jejuni subsp. jejuni serotype O:2 (strain ATCC 700819 / NCTC 11168), this protein is L-serine phosphate decarboxylase Cj1436c.